We begin with the raw amino-acid sequence, 206 residues long: Small ribosomal subunit protein uS4 (206 aa).

Residues 98–155 form the S4 RNA-binding domain; it reads TRLDNVVYRLGWALSRAQARQIVSHGKIAVNGKRVNIPSYNLKPGDVVELLDKDLIPV.

This sequence belongs to the universal ribosomal protein uS4 family. As to quaternary structure, part of the 30S ribosomal subunit. Contacts protein S5. The interaction surface between S4 and S5 is involved in control of translational fidelity.

In terms of biological role, one of the primary rRNA binding proteins, it binds directly to 16S rRNA where it nucleates assembly of the body of the 30S subunit. With S5 and S12 plays an important role in translational accuracy. The chain is Small ribosomal subunit protein uS4 from Dictyoglomus turgidum (strain DSM 6724 / Z-1310).